The sequence spans 190 residues: Holliday junction branch migration complex subunit RuvA (190 aa).

The interval 1 to 64 is domain I; it reads MIGKLTGTLL…EDAQLLYGFG (64 aa). The tract at residues 65–137 is domain II; the sequence is TAQERQAFRE…LKGKLGADVG (73 aa). Positions 137–141 are flexible linker; it reads GVRAH. The segment at 142–190 is domain III; it reads AANDNQADILQALLALGYNDKEAAAALKALPADVGVSEGIKLALKSLSK.

The protein belongs to the RuvA family. In terms of assembly, homotetramer. Forms an RuvA(8)-RuvB(12)-Holliday junction (HJ) complex. HJ DNA is sandwiched between 2 RuvA tetramers; dsDNA enters through RuvA and exits via RuvB. An RuvB hexamer assembles on each DNA strand where it exits the tetramer. Each RuvB hexamer is contacted by two RuvA subunits (via domain III) on 2 adjacent RuvB subunits; this complex drives branch migration. In the full resolvosome a probable DNA-RuvA(4)-RuvB(12)-RuvC(2) complex forms which resolves the HJ.

It is found in the cytoplasm. Functionally, the RuvA-RuvB-RuvC complex processes Holliday junction (HJ) DNA during genetic recombination and DNA repair, while the RuvA-RuvB complex plays an important role in the rescue of blocked DNA replication forks via replication fork reversal (RFR). RuvA specifically binds to HJ cruciform DNA, conferring on it an open structure. The RuvB hexamer acts as an ATP-dependent pump, pulling dsDNA into and through the RuvAB complex. HJ branch migration allows RuvC to scan DNA until it finds its consensus sequence, where it cleaves and resolves the cruciform DNA. This Acidovorax ebreus (strain TPSY) (Diaphorobacter sp. (strain TPSY)) protein is Holliday junction branch migration complex subunit RuvA.